Here is a 481-residue protein sequence, read N- to C-terminus: Pyruvate kinase (481 aa).

Arg36 contacts substrate. Asn38, Ser40, and Asp70 together coordinate K(+). 38–41 (NFSH) contributes to the ATP binding site. ATP-binding residues include Arg77 and Lys160. A Mg(2+)-binding site is contributed by Glu225. Residues Gly251, Asp252, and Thr284 each coordinate substrate. Residue Asp252 participates in Mg(2+) binding.

It belongs to the pyruvate kinase family. Homotetramer. The cofactor is Mg(2+). It depends on K(+) as a cofactor.

The enzyme catalyses pyruvate + ATP = phosphoenolpyruvate + ADP + H(+). It functions in the pathway carbohydrate degradation; glycolysis; pyruvate from D-glyceraldehyde 3-phosphate: step 5/5. Allosterically activated by AMP and by several sugar phosphates. Belongs to type II PK. The chain is Pyruvate kinase (pykA) from Buchnera aphidicola subsp. Schizaphis graminum (strain Sg).